The sequence spans 880 residues: Protein translocase subunit SecA (880 aa).

Residues glutamine 87, 105-109, and aspartate 501 each bind ATP; that span reads GEGKT. 4 residues coordinate Zn(2+): cysteine 864, cysteine 866, cysteine 875, and histidine 876.

The protein belongs to the SecA family. As to quaternary structure, monomer and homodimer. Part of the essential Sec protein translocation apparatus which comprises SecA, SecYEG and auxiliary proteins SecDF-YajC and YidC. Zn(2+) serves as cofactor.

The protein localises to the cell inner membrane. It is found in the cytoplasm. It catalyses the reaction ATP + H2O + cellular proteinSide 1 = ADP + phosphate + cellular proteinSide 2.. Functionally, part of the Sec protein translocase complex. Interacts with the SecYEG preprotein conducting channel. Has a central role in coupling the hydrolysis of ATP to the transfer of proteins into and across the cell membrane, serving both as a receptor for the preprotein-SecB complex and as an ATP-driven molecular motor driving the stepwise translocation of polypeptide chains across the membrane. This Orientia tsutsugamushi (strain Boryong) (Rickettsia tsutsugamushi) protein is Protein translocase subunit SecA.